Reading from the N-terminus, the 120-residue chain is Large ribosomal subunit protein uL18 (120 aa).

Belongs to the universal ribosomal protein uL18 family. Part of the 50S ribosomal subunit; part of the 5S rRNA/L5/L18/L25 subcomplex. Contacts the 5S and 23S rRNAs.

Its function is as follows. This is one of the proteins that bind and probably mediate the attachment of the 5S RNA into the large ribosomal subunit, where it forms part of the central protuberance. This chain is Large ribosomal subunit protein uL18, found in Gluconacetobacter diazotrophicus (strain ATCC 49037 / DSM 5601 / CCUG 37298 / CIP 103539 / LMG 7603 / PAl5).